Reading from the N-terminus, the 258-residue chain is Gamma carbonic anhydrase 3, mitochondrial (258 aa).

A mitochondrion-targeting transit peptide spans 1 to 43; the sequence is MGTMGKAFYSVGFWIRETGQALDRLGCRLQGKNHFREQLSRHR. Substrate is bound by residues 86–88 and 101–102; these read RGD and QD. Zn(2+) contacts are provided by H107, H130, and H135. A substrate-binding site is contributed by N209.

Belongs to the gamma-class carbonic anhydrase family. In terms of assembly, homotrimer. Component of the oxidoreductase respiratory chain complex I; element of the extra matrix-exposed domain, which is attached to the membrane arm of this complex. It depends on Zn(2+) as a cofactor.

The protein localises to the mitochondrion membrane. Enzyme involved in the catabolism of H(2)CO(3) but that does not mediates the reversible hydration of carbon dioxide. Mediates complex I assembly in mitochondria and respiration. The protein is Gamma carbonic anhydrase 3, mitochondrial (GAMMACA3) of Arabidopsis thaliana (Mouse-ear cress).